Here is a 461-residue protein sequence, read N- to C-terminus: Nuclear distribution protein PAC1 (461 aa).

The stretch at 64-93 forms a coiled coil; sequence NSIIRLHRKILDLEQKCQQLTEELEAVPTE. 7 WD repeats span residues 118 to 157, 161 to 203, 209 to 252, 254 to 292, 318 to 362, 382 to 421, and 423 to 461; these read DVGASVTDIKLHPSLPIAFLATDQGKVVAYDLFNRSMPLH, AHMK…AFQL, SHEH…KSFQ, HNQWVRTLELHGDYVITGSNDATIRLSHWPSGNGLSMAV, DDQV…FIPH, GHTSWVRDIKVRGRHLFSCSDDRSIRCWDLVTGQCLKVWP, and ASHGFINCLSVDSDVSNDKLLRELFLSGSIDGKCNVFMR.

Belongs to the WD repeat LIS1/nudF family. In terms of assembly, self-associates. Interacts with NDL1 and dynein.

Its subcellular location is the cytoplasm. It localises to the cytoskeleton. It is found in the spindle pole. Positively regulates the activity of the minus-end directed microtubule motor protein dynein. Plays a central role in positioning the mitotic spindle at the bud neck during cell division. Targets cytoplasmic dynein to microtubule plus ends, thereby promoting dynein-mediated microtubule sliding along the bud cortex and consequently the movement of the mitotic spindle to the bud neck. The chain is Nuclear distribution protein PAC1 from Eremothecium gossypii (strain ATCC 10895 / CBS 109.51 / FGSC 9923 / NRRL Y-1056) (Yeast).